Consider the following 739-residue polypeptide: Thiamine biosynthesis multifunctional protein ThiED (739 aa).

Positions 1 to 210 (MTDFSLYLVT…PSPAEAAREL (210 aa)) are thiamine-phosphate synthase. Residues 37–41 (QLRDK) and asparagine 69 each bind 4-amino-2-methyl-5-(diphosphooxymethyl)pyrimidine. The Mg(2+) site is built by aspartate 70 and aspartate 88. Threonine 107 contributes to the 4-amino-2-methyl-5-(diphosphooxymethyl)pyrimidine binding site. 140–142 (TDT) contributes to the 2-[(2R,5Z)-2-carboxy-4-methylthiazol-5(2H)-ylidene]ethyl phosphate binding site. Residue lysine 143 coordinates 4-amino-2-methyl-5-(diphosphooxymethyl)pyrimidine. 2-[(2R,5Z)-2-carboxy-4-methylthiazol-5(2H)-ylidene]ethyl phosphate contacts are provided by residues glycine 174 and 194–195 (VS). The interval 226–481 (LTIAGTDPTG…GSGSGPVDHF (256 aa)) is hydroxymethylpyrimidine/phosphomethylpyrimidine kinase. 4-amino-5-hydroxymethyl-2-methylpyrimidine is bound at residue glutamine 263. Residues 527–739 (YTRALWEATG…FDQATRQGWN (213 aa)) are thiaminase-2.

In the N-terminal section; belongs to the thiamine-phosphate synthase family. This sequence in the central section; belongs to the ThiD family. It in the C-terminal section; belongs to the thiaminase-2 family. It depends on Mg(2+) as a cofactor.

The enzyme catalyses 2-[(2R,5Z)-2-carboxy-4-methylthiazol-5(2H)-ylidene]ethyl phosphate + 4-amino-2-methyl-5-(diphosphooxymethyl)pyrimidine + 2 H(+) = thiamine phosphate + CO2 + diphosphate. The catalysed reaction is 2-(2-carboxy-4-methylthiazol-5-yl)ethyl phosphate + 4-amino-2-methyl-5-(diphosphooxymethyl)pyrimidine + 2 H(+) = thiamine phosphate + CO2 + diphosphate. It carries out the reaction 4-methyl-5-(2-phosphooxyethyl)-thiazole + 4-amino-2-methyl-5-(diphosphooxymethyl)pyrimidine + H(+) = thiamine phosphate + diphosphate. It catalyses the reaction 4-amino-5-hydroxymethyl-2-methylpyrimidine + ATP = 4-amino-2-methyl-5-(phosphooxymethyl)pyrimidine + ADP + H(+). The enzyme catalyses 4-amino-2-methyl-5-(phosphooxymethyl)pyrimidine + ATP = 4-amino-2-methyl-5-(diphosphooxymethyl)pyrimidine + ADP. It functions in the pathway cofactor biosynthesis; thiamine diphosphate biosynthesis; 4-amino-2-methyl-5-diphosphomethylpyrimidine from 5-amino-1-(5-phospho-D-ribosyl)imidazole: step 3/3. Its pathway is cofactor biosynthesis; thiamine diphosphate biosynthesis; thiamine phosphate from 4-amino-2-methyl-5-diphosphomethylpyrimidine and 4-methyl-5-(2-phosphoethyl)-thiazole: step 1/1. In terms of biological role, condenses 4-methyl-5-(beta-hydroxyethyl)thiazole monophosphate (THZ-P) and 2-methyl-4-amino-5-hydroxymethyl pyrimidine pyrophosphate (HMP-PP) to form thiamine monophosphate (TMP). Its function is as follows. Catalyzes the phosphorylation of hydroxymethylpyrimidine phosphate (HMP-P) to HMP-PP, and of HMP to HMP-P. The sequence is that of Thiamine biosynthesis multifunctional protein ThiED (thiED) from Corynebacterium efficiens (strain DSM 44549 / YS-314 / AJ 12310 / JCM 11189 / NBRC 100395).